Consider the following 118-residue polypeptide: Large ribosomal subunit protein bL20 (118 aa).

This sequence belongs to the bacterial ribosomal protein bL20 family.

Functionally, binds directly to 23S ribosomal RNA and is necessary for the in vitro assembly process of the 50S ribosomal subunit. It is not involved in the protein synthesizing functions of that subunit. This Ralstonia pickettii (strain 12J) protein is Large ribosomal subunit protein bL20.